A 180-amino-acid chain; its full sequence is Large ribosomal subunit protein uL5 (180 aa).

Belongs to the universal ribosomal protein uL5 family. In terms of assembly, part of the 50S ribosomal subunit; part of the 5S rRNA/L5/L18/L25 subcomplex. Contacts the 5S rRNA and the P site tRNA. Forms a bridge to the 30S subunit in the 70S ribosome.

In terms of biological role, this is one of the proteins that bind and probably mediate the attachment of the 5S RNA into the large ribosomal subunit, where it forms part of the central protuberance. In the 70S ribosome it contacts protein S13 of the 30S subunit (bridge B1b), connecting the 2 subunits; this bridge is implicated in subunit movement. Contacts the P site tRNA; the 5S rRNA and some of its associated proteins might help stabilize positioning of ribosome-bound tRNAs. In Gloeothece citriformis (strain PCC 7424) (Cyanothece sp. (strain PCC 7424)), this protein is Large ribosomal subunit protein uL5.